A 378-amino-acid chain; its full sequence is S-(hydroxymethyl)glutathione dehydrogenase (378 aa).

The Zn(2+) site is built by C49, H71, C101, C104, C107, C115, and C178.

Belongs to the zinc-containing alcohol dehydrogenase family. Class-III subfamily. In terms of assembly, homodimer. Zn(2+) is required as a cofactor.

The protein localises to the cytoplasm. It carries out the reaction S-(hydroxymethyl)glutathione + NADP(+) = S-formylglutathione + NADPH + H(+). The enzyme catalyses S-(hydroxymethyl)glutathione + NAD(+) = S-formylglutathione + NADH + H(+). The catalysed reaction is a primary alcohol + NAD(+) = an aldehyde + NADH + H(+). It catalyses the reaction a secondary alcohol + NAD(+) = a ketone + NADH + H(+). It carries out the reaction S-nitrosoglutathione + NADH + H(+) = S-(hydroxysulfenamide)glutathione + NAD(+). In terms of biological role, has high formaldehyde dehydrogenase activity in the presence of glutathione and catalyzes the oxidation of normal alcohols in a reaction that is not GSH-dependent. In addition, hemithiolacetals other than those formed from GSH, including omega-thiol fatty acids, also are substrates. Also acts as a S-nitroso-glutathione reductase by catalyzing the NADH-dependent reduction of S-nitrosoglutathione. The sequence is that of S-(hydroxymethyl)glutathione dehydrogenase (frmA) from Haemophilus influenzae (strain ATCC 51907 / DSM 11121 / KW20 / Rd).